Consider the following 256-residue polypeptide: Imidazole glycerol phosphate synthase subunit HisF (256 aa).

Active-site residues include D11 and D130.

This sequence belongs to the HisA/HisF family. Heterodimer of HisH and HisF.

It localises to the cytoplasm. The catalysed reaction is 5-[(5-phospho-1-deoxy-D-ribulos-1-ylimino)methylamino]-1-(5-phospho-beta-D-ribosyl)imidazole-4-carboxamide + L-glutamine = D-erythro-1-(imidazol-4-yl)glycerol 3-phosphate + 5-amino-1-(5-phospho-beta-D-ribosyl)imidazole-4-carboxamide + L-glutamate + H(+). The protein operates within amino-acid biosynthesis; L-histidine biosynthesis; L-histidine from 5-phospho-alpha-D-ribose 1-diphosphate: step 5/9. Its function is as follows. IGPS catalyzes the conversion of PRFAR and glutamine to IGP, AICAR and glutamate. The HisF subunit catalyzes the cyclization activity that produces IGP and AICAR from PRFAR using the ammonia provided by the HisH subunit. This Prochlorococcus marinus (strain MIT 9312) protein is Imidazole glycerol phosphate synthase subunit HisF.